A 414-amino-acid chain; its full sequence is TBC domain-containing protein C1778.09 (414 aa).

Residues 158 to 343 (GIPDCWRSIA…RIWDLLFLLG (186 aa)) enclose the Rab-GAP TBC domain.

Its subcellular location is the cytoplasm. It is found in the nucleus. The protein is TBC domain-containing protein C1778.09 of Schizosaccharomyces pombe (strain 972 / ATCC 24843) (Fission yeast).